Consider the following 121-residue polypeptide: Large ribosomal subunit protein uL22c (121 aa).

It belongs to the universal ribosomal protein uL22 family. In terms of assembly, part of the 50S ribosomal subunit.

Its subcellular location is the plastid. The protein localises to the chloroplast. This protein binds specifically to 23S rRNA. Its function is as follows. The globular domain of the protein is located near the polypeptide exit tunnel on the outside of the subunit, while an extended beta-hairpin is found that lines the wall of the exit tunnel in the center of the 70S ribosome. The sequence is that of Large ribosomal subunit protein uL22c (rpl22) from Guillardia theta (Cryptophyte).